Here is a 282-residue protein sequence, read N- to C-terminus: Pseudokinase OPG198 (282 aa).

Residues Met1 and Lys30 each contribute to the ATP site. Residues 1–282 (MESFKYCFDN…DRLRRLFIQD (282 aa)) enclose the Protein kinase domain.

Belongs to the protein kinase superfamily. Ser/Thr protein kinase family. Poxviruses subfamily. As to quaternary structure, interacts with B1/VPK1. Interacts with host VRK1. Interacts with host VRK2.

The protein resides in the host nucleus. With respect to regulation, both catalytically active kinases B1/VPK1 and host VRK2 repress B12 inhibitory activity in a B1/VPK1 deletion mutant strain. Pseudokinase that plays a role in viral DNA replication repression by activating the antiviral protein BANF1 and inhibiting the activity of host VRK1, a cellular modulator of BANF1. The sequence is that of Pseudokinase OPG198 (OPG198) from Cynomys gunnisoni (Gunnison's prairie dog).